The chain runs to 539 residues: uncharacterized protein (539 aa).

Serine 216 serves as the catalytic Acyl-ester intermediate.

Belongs to the type-B carboxylesterase/lipase family.

The protein resides in the cytoplasm. The protein localises to the nucleus. This is an uncharacterized protein from Schizosaccharomyces pombe (strain 972 / ATCC 24843) (Fission yeast).